The sequence spans 421 residues: UDP-N-acetylglucosamine 1-carboxyvinyltransferase (421 aa).

22–23 contributes to the phosphoenolpyruvate binding site; it reads KN. Arg-93 lines the UDP-N-acetyl-alpha-D-glucosamine pocket. Cys-117 functions as the Proton donor in the catalytic mechanism. At Cys-117 the chain carries 2-(S-cysteinyl)pyruvic acid O-phosphothioketal. Residues 122–126, Asp-308, and Val-330 each bind UDP-N-acetyl-alpha-D-glucosamine; that span reads RPVDL.

The protein belongs to the EPSP synthase family. MurA subfamily.

Its subcellular location is the cytoplasm. The catalysed reaction is phosphoenolpyruvate + UDP-N-acetyl-alpha-D-glucosamine = UDP-N-acetyl-3-O-(1-carboxyvinyl)-alpha-D-glucosamine + phosphate. The protein operates within cell wall biogenesis; peptidoglycan biosynthesis. Cell wall formation. Adds enolpyruvyl to UDP-N-acetylglucosamine. This chain is UDP-N-acetylglucosamine 1-carboxyvinyltransferase, found in Pseudomonas paraeruginosa (strain DSM 24068 / PA7) (Pseudomonas aeruginosa (strain PA7)).